Consider the following 529-residue polypeptide: Bifunctional purine biosynthesis protein PurH (529 aa).

In terms of domain architecture, MGS-like spans 1–148; that stretch reads MTNRNVIKNV…KNYKNVLVVT (148 aa).

This sequence belongs to the PurH family.

The enzyme catalyses (6R)-10-formyltetrahydrofolate + 5-amino-1-(5-phospho-beta-D-ribosyl)imidazole-4-carboxamide = 5-formamido-1-(5-phospho-D-ribosyl)imidazole-4-carboxamide + (6S)-5,6,7,8-tetrahydrofolate. The catalysed reaction is IMP + H2O = 5-formamido-1-(5-phospho-D-ribosyl)imidazole-4-carboxamide. Its pathway is purine metabolism; IMP biosynthesis via de novo pathway; 5-formamido-1-(5-phospho-D-ribosyl)imidazole-4-carboxamide from 5-amino-1-(5-phospho-D-ribosyl)imidazole-4-carboxamide (10-formyl THF route): step 1/1. It functions in the pathway purine metabolism; IMP biosynthesis via de novo pathway; IMP from 5-formamido-1-(5-phospho-D-ribosyl)imidazole-4-carboxamide: step 1/1. This chain is Bifunctional purine biosynthesis protein PurH, found in Buchnera aphidicola subsp. Baizongia pistaciae (strain Bp).